The chain runs to 551 residues: E3 SUMO-protein ligase CBX4 (551 aa).

One can recognise a Chromo domain in the interval 11 to 69 (FAVESIEKKRIRKGRVEYLVKWRGWSPKYNTWEPEENILDPRLLIAFQNRERQEQLMGY). Glycyl lysine isopeptide (Lys-Gly) (interchain with G-Cter in SUMO2) cross-links involve residues K77, K106, K114, and K125. A disordered region spans residues 125-152 (KKHHQYQPHSKERSGKPPPPGKSGKYYY). K149 is subject to N6-acetyllysine; alternate. K149 is covalently cross-linked (Glycyl lysine isopeptide (Lys-Gly) (interchain with G-Cter in SUMO2); alternate). Residues K157, K167, and K178 each participate in a glycyl lysine isopeptide (Lys-Gly) (interchain with G-Cter in SUMO2) cross-link. Residues 172–193 (QYQGGHKEAPSPTCPDLGTKSH) form a disordered region. At S182 the chain carries Phosphoserine. Residues K191, K205, K212, K223, K249, K268, K278, and K280 each participate in a glycyl lysine isopeptide (Lys-Gly) (interchain with G-Cter in SUMO2) cross-link. The segment at 216 to 244 (GGAGAPGKGSEKGPPNGMTPAPKEAVTGN) is disordered. Basic and acidic residues-rich tracts occupy residues 281-291 (SGEAAEGEARS), 298-310 (AAEE…DRTF), and 317-332 (SEEK…REEE). 2 disordered regions span residues 281–399 (SGEA…TVGL) and 430–451 (TPTC…PTAA). Glycyl lysine isopeptide (Lys-Gly) (interchain with G-Cter in SUMO2) cross-links involve residues K321, K353, and K366. The segment covering 381 to 396 (PAHHHHHHHHHHHHHT) has biased composition (basic residues). Position 463 is a phosphoserine (S463). K490 is covalently cross-linked (Glycyl lysine isopeptide (Lys-Gly) (interchain with G-Cter in SUMO2); alternate). A Glycyl lysine isopeptide (Lys-Gly) (interchain with G-Cter in SUMO); alternate cross-link involves residue K490.

As to quaternary structure, interacts with SUV39H1 and HIPK2. Interacts with CSNK2B. Component of a PRC1-like complex. The composition of the PRC1 complex differs between the PRC1 complex in pluripotent embryonic stem cells containing RNF2, CBX7 and PCGF2, and the PRC1 complex in differentiating cells containing RNF2, CBX2, CBX4 and BMI1. Interacts with RNF2. Interacts (via chromodomain) with histone H3K9Me3 and single-stranded RNA (ssRNA). Interacts with CHTOP. May interact with H3C15 and H3C1. Interacts with PRDM1. Post-translationally, ubiquitinated. Ubiquitination regulates the function of the Polycomb group (PcG) multiprotein PRC1-like complex. Deubiquitinated by USP26. Expressed in embryoid bodies.

The protein localises to the nucleus. It localises to the nucleus speckle. It participates in protein modification; protein sumoylation. Its function is as follows. E3 SUMO-protein ligase that catalyzes sumoylation of target proteins by promoting the transfer of SUMO from the E2 enzyme to the substrate. Involved in the sumoylation of HNRNPK, a p53/TP53 transcriptional coactivator, hence indirectly regulates p53/TP53 transcriptional activation resulting in p21/CDKN1A expression. In terms of biological role, component of a Polycomb group (PcG) multiprotein PRC1-like complex, a complex class required to maintain the transcriptionally repressive state of many genes, including Hox genes, throughout development. PcG PRC1 complex acts via chromatin remodeling and modification of histones; it mediates monoubiquitination of histone H2A 'Lys-119', rendering chromatin heritably changed in its expressibility. Binds to histone H3 trimethylated at 'Lys-9' (H3K9me3). Plays a role in the lineage differentiation of the germ layers in embryonic development. This is E3 SUMO-protein ligase CBX4 (Cbx4) from Mus musculus (Mouse).